Reading from the N-terminus, the 208-residue chain is Thymidylate kinase (208 aa).

Residue 10–17 coordinates ATP; the sequence is GPEGSGKT.

The protein belongs to the thymidylate kinase family.

The enzyme catalyses dTMP + ATP = dTDP + ADP. Its function is as follows. Phosphorylation of dTMP to form dTDP in both de novo and salvage pathways of dTTP synthesis. In Bacillus cereus (strain Q1), this protein is Thymidylate kinase.